Consider the following 522-residue polypeptide: Putative zinc finger protein 286B (522 aa).

The interval 1–30 (METDLAEMPEKGVLSSQDSPHFQEKSTEEG) is disordered. C2H2-type zinc fingers lie at residues 244–266 (HKCN…QRVH), 272–294 (YTCN…QRTH), 299–321 (FECR…QRIH), 327–349 (YECN…QLIH), 355–377 (YECN…QRTH), 383–405 (YKCQ…QRVH), 411–433 (YECS…QRIH), 439–461 (YECS…QRIH), 467–489 (YKCS…QRTH), and 495–517 (FRCN…QRVH).

The protein belongs to the krueppel C2H2-type zinc-finger protein family.

It is found in the nucleus. Its function is as follows. May be involved in transcriptional regulation. This chain is Putative zinc finger protein 286B (ZNF286B), found in Homo sapiens (Human).